Here is a 37-residue protein sequence, read N- to C-terminus: Large ribosomal subunit protein bL36 (37 aa).

The Zn(2+) site is built by C11, C14, C27, and H32.

Belongs to the bacterial ribosomal protein bL36 family. As to quaternary structure, part of the 50S ribosomal subunit. Requires Zn(2+) as cofactor.

Functionally, binds the 23S rRNA. This chain is Large ribosomal subunit protein bL36 (rpmJ), found in Deinococcus radiodurans (strain ATCC 13939 / DSM 20539 / JCM 16871 / CCUG 27074 / LMG 4051 / NBRC 15346 / NCIMB 9279 / VKM B-1422 / R1).